Reading from the N-terminus, the 316-residue chain is Beta-ketoacyl-[acyl-carrier-protein] synthase III (316 aa).

Residues Cys-112 and His-243 contribute to the active site. The segment at 244–248 (QANIR) is ACP-binding. Asn-273 is a catalytic residue.

It belongs to the thiolase-like superfamily. FabH family. In terms of assembly, homodimer.

The protein localises to the cytoplasm. It catalyses the reaction malonyl-[ACP] + acetyl-CoA + H(+) = 3-oxobutanoyl-[ACP] + CO2 + CoA. It functions in the pathway lipid metabolism; fatty acid biosynthesis. Functionally, catalyzes the condensation reaction of fatty acid synthesis by the addition to an acyl acceptor of two carbons from malonyl-ACP. Catalyzes the first condensation reaction which initiates fatty acid synthesis and may therefore play a role in governing the total rate of fatty acid production. Possesses both acetoacetyl-ACP synthase and acetyl transacylase activities. Its substrate specificity determines the biosynthesis of branched-chain and/or straight-chain of fatty acids. The protein is Beta-ketoacyl-[acyl-carrier-protein] synthase III of Haemophilus ducreyi (strain 35000HP / ATCC 700724).